Here is a 210-residue protein sequence, read N- to C-terminus: High mobility group protein B2 (210 aa).

Lys-3 bears the N6-acetyllysine mark. The HMG box 1 DNA-binding region spans 9-79 (PRGKMSSYAF…RYDREMKNYV (71 aa)). The residue at position 23 (Cys-23) is a Cysteine sulfonic acid (-SO3H); alternate. Cys-23 and Cys-45 are disulfide-bonded. Lys-30 is modified (N6-acetyllysine). At Ser-35 the chain carries Phosphoserine. Lys-43 carries the N6-acetyllysine modification. Cys-45 carries the post-translational modification Cysteine sulfonic acid (-SO3H); alternate. The segment at 71–102 (YDREMKNYVPPKGDKKGKKKDPNAPKRPPSAF) is disordered. At Lys-90 the chain carries N6-acetyllysine. Positions 95–163 (PKRPPSAFFL…KYEKDIAAYR (69 aa)) form a DNA-binding region, HMG box 2. Phosphoserine is present on Ser-100. At Cys-106 the chain carries Cysteine sulfonic acid (-SO3H). An N6-acetyllysine mark is found at Lys-114 and Lys-141. A compositionally biased stretch (basic and acidic residues) spans 162 to 172 (YRAKGKSEAGK). The disordered stretch occupies residues 162–210 (YRAKGKSEAGKKGPGRPTGSKKKNEPEDEEEEEEEEEEEDDEEEEEDEE). The segment at 165–180 (KGKSEAGKKGPGRPTG) is required for chemotactic activity. Over residues 187–210 (PEDEEEEEEEEEEEDDEEEEEDEE) the composition is skewed to acidic residues.

It belongs to the HMGB family. Interacts with POU2F2, POU2F1 and POU3F1. Component of the RAG complex composed of core components RAG1 and RAG2, and associated component HMGB1 or HMGB2. Component of the SET complex, composed of at least ANP32A, APEX1, HMGB2, NME1, SET and TREX1. Directly interacts with SET. Interacts with LEF1. In terms of processing, reduction/oxidation of cysteine residues Cys-23, Cys-45 and Cys-106 and a possible intramolecular disulfide bond involving Cys-23 and Cys-45 give rise to different redox forms with specific functional activities in various cellular compartments: 1- fully reduced HMGB2 (HMGB2C23hC45hC106h), 2- disulfide HMGB2 (HMGB2C23-C45C106h) and 3- sulfonyl HMGB2 (HMGB2C23soC45soC106so). Widely expressed in embryo. In adult mainly expressed in lymphoid organs and testes. Expressed in primary spermatocytes. Expressed in the superficial zone of articular cartilage.

The protein localises to the nucleus. The protein resides in the chromosome. It localises to the cytoplasm. It is found in the secreted. Functionally, multifunctional protein with various roles in different cellular compartments. May act in a redox sensitive manner. In the nucleus is an abundant chromatin-associated non-histone protein involved in transcription, chromatin remodeling and V(D)J recombination and probably other processes. Binds DNA with a preference to non-canonical DNA structures such as single-stranded DNA. Can bent DNA and enhance DNA flexibility by looping thus providing a mechanism to promote activities on various gene promoters by enhancing transcription factor binding and/or bringing distant regulatory sequences into close proximity. Involved in V(D)J recombination by acting as a cofactor of the RAG complex: acts by stimulating cleavage and RAG protein binding at the 23 bp spacer of conserved recombination signal sequences (RSS). Proposed to be involved in the innate immune response to nucleic acids by acting as a cytoplasmic promiscuous immunogenic DNA/RNA sensor which cooperates with subsequent discriminative sensing by specific pattern recognition receptors. In the extracellular compartment acts as a chemokine. Promotes proliferation and migration of endothelial cells implicating AGER/RAGE. Has antimicrobial activity in gastrointestinal epithelial tissues. Involved in inflammatory response to antigenic stimulus coupled with pro-inflammatory activity. May play a role in germ cell differentiation. Involved in modulation of neurogenesis probably by regulation of neural stem proliferation. Involved in articular cartilage surface maintenance implicating LEF1 and the Wnt/beta-catenin pathway. This is High mobility group protein B2 (Hmgb2) from Mus musculus (Mouse).